Consider the following 289-residue polypeptide: MQPPKTHNHIELAFEIDSDLYELYIAVLSQVGIEYFLEDDHKLLAYLPESDWNADKEASINIMLQETFGSVPRFTASFMADRNWNAEWEAHLQPVEISDRFLIIQHQKEYDVKPGQIVIAINPKMSFGTGYHATTRLMLRQMEELDLADKKIMDIGTGTGVLAIAARKLGNRNPILAFDNNAWAAENAVENVAENDVADIRVELLDAEEELAATLEEGYDLILANINKNVLDRILPTIRRHAPNAQVLLSGVLVYDEPWLKQLLKRIKYTNVKTIYEDEWLSALVEPKN.

Threonine 135, glycine 156, aspartate 179, and asparagine 225 together coordinate S-adenosyl-L-methionine.

It belongs to the methyltransferase superfamily. PrmA family.

Its subcellular location is the cytoplasm. The catalysed reaction is L-lysyl-[protein] + 3 S-adenosyl-L-methionine = N(6),N(6),N(6)-trimethyl-L-lysyl-[protein] + 3 S-adenosyl-L-homocysteine + 3 H(+). Its function is as follows. Methylates ribosomal protein L11. The chain is Ribosomal protein L11 methyltransferase from Chlorobaculum tepidum (strain ATCC 49652 / DSM 12025 / NBRC 103806 / TLS) (Chlorobium tepidum).